The following is a 167-amino-acid chain: Gametocyte-specific factor 1 (167 aa).

2 consecutive CHHC U11-48K-type zinc fingers follow at residues Leu14–His41 and Leu48–Ser75. Zn(2+) is bound by residues Cys17, His23, His33, Cys37, Cys51, His57, His67, and Cys71.

Belongs to the UPF0224 (FAM112) family.

It is found in the cytoplasm. Its function is as follows. Required for spermatogenesis and is involved in the suppression of retrotransposon transcription in male germ cells. This chain is Gametocyte-specific factor 1 (GTSF1), found in Bos taurus (Bovine).